The primary structure comprises 252 residues: Probable phosphatase Shewana3_2794 (252 aa).

9 residues coordinate Zn(2+): H8, H10, H16, H41, E74, H102, H132, D193, and H195.

The protein belongs to the PHP family. The cofactor is Zn(2+).

This is Probable phosphatase Shewana3_2794 from Shewanella sp. (strain ANA-3).